Here is a 417-residue protein sequence, read N- to C-terminus: NADH-quinone oxidoreductase subunit D (417 aa).

Belongs to the complex I 49 kDa subunit family. As to quaternary structure, NDH-1 is composed of 14 different subunits. Subunits NuoB, C, D, E, F, and G constitute the peripheral sector of the complex.

The protein localises to the cell inner membrane. It catalyses the reaction a quinone + NADH + 5 H(+)(in) = a quinol + NAD(+) + 4 H(+)(out). Its function is as follows. NDH-1 shuttles electrons from NADH, via FMN and iron-sulfur (Fe-S) centers, to quinones in the respiratory chain. The immediate electron acceptor for the enzyme in this species is believed to be ubiquinone. Couples the redox reaction to proton translocation (for every two electrons transferred, four hydrogen ions are translocated across the cytoplasmic membrane), and thus conserves the redox energy in a proton gradient. The protein is NADH-quinone oxidoreductase subunit D of Methylibium petroleiphilum (strain ATCC BAA-1232 / LMG 22953 / PM1).